The chain runs to 249 residues: Phosphomannomutase 1 (249 aa).

The active-site Nucleophile is the Asp12. Residues Asp12 and Asp14 each contribute to the Mg(2+) site. The active-site Proton donor/acceptor is Asp14. Residues Arg21, Arg123, Arg134, Arg141, Ser179, and Asp181 each coordinate alpha-D-mannose 1-phosphate. Residues Asp209, Asp223, and Thr227 each coordinate Mg(2+).

This sequence belongs to the eukaryotic PMM family. In terms of assembly, homodimer.

The protein localises to the cytoplasm. The catalysed reaction is alpha-D-mannose 1-phosphate = D-mannose 6-phosphate. It functions in the pathway nucleotide-sugar biosynthesis; GDP-alpha-D-mannose biosynthesis; alpha-D-mannose 1-phosphate from D-fructose 6-phosphate: step 2/2. Functionally, involved in the synthesis of the GDP-mannose and dolichol-phosphate-mannose required for a number of critical mannosyl transfer reactions. The sequence is that of Phosphomannomutase 1 (pmmA) from Dictyostelium discoideum (Social amoeba).